The chain runs to 105 residues: Cuticle protein AMP1B (105 aa).

A disordered region spans residues 1 to 21 (DRDAQTLTDERSDQGDGNFRY). The Chitin-binding type R&amp;R domain occupies 16-81 (DGNFRYEFET…PSSDLLPVPP (66 aa)).

As to expression, arthrodial membrane.

The protein is Cuticle protein AMP1B of Homarus americanus (American lobster).